The following is a 1601-amino-acid chain: PH and SEC7 domain-containing protein (1601 aa).

Residues 1–340 are mediates regulation of axon branching and microtubule organization; sequence MSEELKVVLR…TGDLILNLSR (340 aa). In terms of domain architecture, PDZ spans 6 to 88; that stretch reads KVVLRRSEQH…LVTLELKRDP (83 aa). Disordered stretches follow at residues 113 to 192, 211 to 322, 339 to 440, 459 to 657, 737 to 780, 872 to 965, and 1040 to 1126; these read NIYD…SSTK, TSPT…PAKA, SRTP…SLTN, LEED…SSSG, NSSL…SETA, QQQQ…LLSC, and QQLK…SDVE. Over residues 118–128 the composition is skewed to polar residues; that stretch reads HSSSTNSSPNH. The segment covering 166–191 has biased composition (low complexity); sequence ASGSTTTTTTATHTHSHSRNSSASST. The segment covering 283 to 297 has biased composition (polar residues); sequence QSLQHSNSYSGSPVT. Basic and acidic residues predominate over residues 300 to 311; that stretch reads RFADREPEREPE. The Microtubule elimination domain (MTED); Binds tubulin and blocks microtubule polymerization motif lies at 323–340; that stretch reads PRFEAYMMTGDLILNLSR. Over residues 339-348 the composition is skewed to polar residues; that stretch reads SRTPQTSNPL. The segment covering 353 to 362 has biased composition (basic and acidic residues); sequence KKIDSLRDSP. Low complexity-rich tracts occupy residues 382 to 399, 409 to 424, and 468 to 487; these read SSPT…TSSD, QKQQ…QQQQ, and QRQQ…YEYY. Over residues 488 to 505 the composition is skewed to acidic residues; that stretch reads QNEDELEEQEEVEEEREE. Residues 510–519 are compositionally biased toward polar residues; the sequence is YDITNIETYQ. Residues 526–557 show a composition bias toward acidic residues; it reads DDDDSDRQCLVDDDDDDDAYDDEENDAGDEDY. 2 stretches are compositionally biased toward polar residues: residues 558–567 and 617–630; these read STNSLGSGSA and TSFS…SLST. The segment covering 640-657 has biased composition (low complexity); it reads SVPTSPEPSSLVPESSSG. Over residues 737–747 the composition is skewed to polar residues; that stretch reads NSSLASNNNEG. Low complexity-rich tracts occupy residues 752–780, 872–942, 949–965, and 1040–1052; these read NRSS…SETA, QQQQ…QQQQ, GGQV…LLSC, and QQLK…QQQQ. The interval 894–1601 is mediates association to the membrane and rescricts the microtubule-inhibiting activity to the cell cortex; that stretch reads SSSPQHSAVG…PTNRKEKKKK (708 aa). A compositionally biased stretch (basic and acidic residues) spans 1053 to 1071; it reads QRERERDRDRDREQSEHKV. The SEC7 domain maps to 1125–1291; sequence VESLHSYHYS…KSLYQAIKTK (167 aa). Residues 1332–1445 form the PH domain; sequence VEYKKGYVMR…WVETINYVCA (114 aa). Positions 1544–1601 are disordered; it reads LELQAQQPSPASHEEEADTFPVGTTACTPPTPQSINQKDQQKEQQQQQPTNRKEKKKK. Over residues 1568–1579 the composition is skewed to polar residues; the sequence is TACTPPTPQSIN.

Belongs to the PSD family. In terms of assembly, interacts (via MTED motif) with tubulin. Expressed in the head (at protein level).

The protein localises to the cell projection. Its subcellular location is the axon. The protein resides in the cytoplasm. It localises to the cell membrane. It is found in the cell cortex. Functionally, guanine nucleotide exchange factor for Arf6. Regulates axon growth and branching by inhibiting microtubule polymerisation at the cortex. Together with shot, promotes axonal microtubule bundle integrity. Required for normal ethanol-induced tolerance and preference. Probably by activating Arf6, counteracts ethanol-induced sedation. The sequence is that of PH and SEC7 domain-containing protein from Drosophila melanogaster (Fruit fly).